The primary structure comprises 128 residues: Aspartate 1-decarboxylase (128 aa).

The active-site Schiff-base intermediate with substrate; via pyruvic acid is the Ser25. A Pyruvic acid (Ser) modification is found at Ser25. Substrate is bound at residue Thr57. The active-site Proton donor is the Tyr58. 73-75 (GSA) is a substrate binding site.

This sequence belongs to the PanD family. Heterooctamer of four alpha and four beta subunits. It depends on pyruvate as a cofactor. Is synthesized initially as an inactive proenzyme, which is activated by self-cleavage at a specific serine bond to produce a beta-subunit with a hydroxyl group at its C-terminus and an alpha-subunit with a pyruvoyl group at its N-terminus.

It is found in the cytoplasm. It carries out the reaction L-aspartate + H(+) = beta-alanine + CO2. Its pathway is cofactor biosynthesis; (R)-pantothenate biosynthesis; beta-alanine from L-aspartate: step 1/1. Functionally, catalyzes the pyruvoyl-dependent decarboxylation of aspartate to produce beta-alanine. The protein is Aspartate 1-decarboxylase of Burkholderia thailandensis (strain ATCC 700388 / DSM 13276 / CCUG 48851 / CIP 106301 / E264).